The following is a 733-amino-acid chain: Centrosomal protein of 68 kDa (733 aa).

The segment covering 71-80 (SKEPVADRSK) has biased composition (basic and acidic residues). 3 disordered regions span residues 71 to 92 (SKEPVADRSKPPLRGPLPSASV), 150 to 207 (GLSQ…SFAN), and 222 to 244 (VVGAGPPLQGSAQPLTSGSDATG). A compositionally biased stretch (low complexity) spans 178–190 (SSRSISASSVGSS). Polar residues predominate over residues 231–241 (GSAQPLTSGSD). The residue at position 315 (Ser315) is a Phosphoserine. Residues 420–442 (PQLKTKEKEPPFPRQKRGRQHVS) form a disordered region. Ser453 and Ser459 each carry phosphoserine. Residues 497-571 (HSSLQVSDSD…KPLKTQPASK (75 aa)) are disordered. Positions 540–569 (IQPQDSRGKSSLMSNQTLGVSSKPLKTQPA) are enriched in polar residues.

In terms of assembly, interacts with CNTLN; the interaction recruits CEP68 to the centrosome. Interacts with the SCF(FBXW11) complex which contains SKP1, CUL1 and FBXW11; the interaction is probably mediated by FBXW11 and the complex also contains CDK5RAP2 and PCNT. Also interacts with F-box protein BTRC. Interacts with serine/threonine-protein kinase PLK1; the interaction leads to phosphorylation of CEP68 and its subsequent degradation. Interacts with NEK2; the interaction leads to phosphorylation of CEP68. In terms of processing, phosphorylation by PLK1 is required for binding to BTRC in prometaphase. Phosphorylated directly or indirectly by NEK2. NEK2-mediated phosphorylation promotes CEP68 dissociation from the centrosome and its degradation at the onset of mitosis. Post-translationally, ubiquitinated and targeted for proteasomal degradation in early mitosis by the SCF(BTRC) and/or SCF(FBXW11) E3 ubiquitin-protein ligase complexes. Degradation is complete by prometaphase and is required for removal of CDK5RAP2 from the peripheral pericentriolar material and subsequent centriole separation.

Its subcellular location is the cytoplasm. It localises to the cytoskeleton. The protein localises to the microtubule organizing center. The protein resides in the centrosome. Functionally, involved in maintenance of centrosome cohesion, probably as part of a linker structure which prevents centrosome splitting. Required for localization of CDK5RAP2 to the centrosome during interphase. Contributes to CROCC/rootletin filament formation. The polypeptide is Centrosomal protein of 68 kDa (Cep68) (Mus musculus (Mouse)).